Here is a 130-residue protein sequence, read N- to C-terminus: Small ribosomal subunit protein uS11 (130 aa).

Belongs to the universal ribosomal protein uS11 family. Part of the 30S ribosomal subunit. Interacts with proteins S7 and S18. Binds to IF-3.

Functionally, located on the platform of the 30S subunit, it bridges several disparate RNA helices of the 16S rRNA. Forms part of the Shine-Dalgarno cleft in the 70S ribosome. The polypeptide is Small ribosomal subunit protein uS11 (Blochmanniella floridana).